The sequence spans 166 residues: RNA pyrophosphohydrolase (166 aa).

One can recognise a Nudix hydrolase domain in the interval 6 to 149; it reads GFRPNVGIIL…KRDVYRKAMM (144 aa). The Nudix box signature appears at 38 to 59; sequence GGIHFGETPEQALYRELREEVG.

The protein belongs to the Nudix hydrolase family. RppH subfamily. A divalent metal cation is required as a cofactor.

Accelerates the degradation of transcripts by removing pyrophosphate from the 5'-end of triphosphorylated RNA, leading to a more labile monophosphorylated state that can stimulate subsequent ribonuclease cleavage. This Acinetobacter baylyi (strain ATCC 33305 / BD413 / ADP1) protein is RNA pyrophosphohydrolase.